Reading from the N-terminus, the 270-residue chain is Thymidylate synthase (270 aa).

Residues R28 and 133–134 (RR) each bind dUMP. C153 (nucleophile) is an active-site residue. Residues 173 to 176 (RSAD), N184, and 214 to 216 (HIY) contribute to the dUMP site. D176 is a (6R)-5,10-methylene-5,6,7,8-tetrahydrofolate binding site. A269 provides a ligand contact to (6R)-5,10-methylene-5,6,7,8-tetrahydrofolate.

This sequence belongs to the thymidylate synthase family. Bacterial-type ThyA subfamily. Homodimer.

The protein resides in the cytoplasm. The enzyme catalyses dUMP + (6R)-5,10-methylene-5,6,7,8-tetrahydrofolate = 7,8-dihydrofolate + dTMP. It participates in pyrimidine metabolism; dTTP biosynthesis. Functionally, catalyzes the reductive methylation of 2'-deoxyuridine-5'-monophosphate (dUMP) to 2'-deoxythymidine-5'-monophosphate (dTMP) while utilizing 5,10-methylenetetrahydrofolate (mTHF) as the methyl donor and reductant in the reaction, yielding dihydrofolate (DHF) as a by-product. This enzymatic reaction provides an intracellular de novo source of dTMP, an essential precursor for DNA biosynthesis. This chain is Thymidylate synthase, found in Corynebacterium diphtheriae (strain ATCC 700971 / NCTC 13129 / Biotype gravis).